The sequence spans 382 residues: Homoserine O-acetyltransferase (382 aa).

Residues 52–356 form the AB hydrolase-1 domain; that stretch reads NVVMVLHALT…TYGHDGFLVE (305 aa). Serine 157 serves as the catalytic Nucleophile. Arginine 227 serves as a coordination point for substrate. Catalysis depends on residues aspartate 320 and histidine 350. Aspartate 351 lines the substrate pocket.

Belongs to the AB hydrolase superfamily. MetX family. Homodimer.

Its subcellular location is the cytoplasm. It catalyses the reaction L-homoserine + acetyl-CoA = O-acetyl-L-homoserine + CoA. It functions in the pathway amino-acid biosynthesis; L-methionine biosynthesis via de novo pathway; O-acetyl-L-homoserine from L-homoserine: step 1/1. In terms of biological role, transfers an acetyl group from acetyl-CoA to L-homoserine, forming acetyl-L-homoserine. In Mycobacterium leprae (strain TN), this protein is Homoserine O-acetyltransferase.